The chain runs to 509 residues: tRNA-2-methylthio-N(6)-dimethylallyladenosine synthase (509 aa).

Positions 1 to 20 (MNEKQKQESGQVNPADKTSE) are disordered. An MTTase N-terminal domain is found at 66-184 (RKFYIRTYGC…LPELLSEAYL (119 aa)). Residues cysteine 75, cysteine 111, cysteine 145, cysteine 221, cysteine 225, and cysteine 228 each contribute to the [4Fe-4S] cluster site. Positions 207–437 (RNGKIKGWVN…NDLVKEISAK (231 aa)) constitute a Radical SAM core domain. The 64-residue stretch at 440–503 (KEYEGRTVEV…TWSLDGVMAG (64 aa)) folds into the TRAM domain.

It belongs to the methylthiotransferase family. MiaB subfamily. In terms of assembly, monomer. [4Fe-4S] cluster is required as a cofactor.

Its subcellular location is the cytoplasm. The catalysed reaction is N(6)-dimethylallyladenosine(37) in tRNA + (sulfur carrier)-SH + AH2 + 2 S-adenosyl-L-methionine = 2-methylsulfanyl-N(6)-dimethylallyladenosine(37) in tRNA + (sulfur carrier)-H + 5'-deoxyadenosine + L-methionine + A + S-adenosyl-L-homocysteine + 2 H(+). Its function is as follows. Catalyzes the methylthiolation of N6-(dimethylallyl)adenosine (i(6)A), leading to the formation of 2-methylthio-N6-(dimethylallyl)adenosine (ms(2)i(6)A) at position 37 in tRNAs that read codons beginning with uridine. The chain is tRNA-2-methylthio-N(6)-dimethylallyladenosine synthase from Bacillus velezensis (strain DSM 23117 / BGSC 10A6 / LMG 26770 / FZB42) (Bacillus amyloliquefaciens subsp. plantarum).